The following is a 482-amino-acid chain: Probable cytosol aminopeptidase (482 aa).

Mn(2+)-binding residues include K251 and D256. Residue K263 is part of the active site. The Mn(2+) site is built by D274, D333, and E335. R337 is an active-site residue.

This sequence belongs to the peptidase M17 family. It depends on Mn(2+) as a cofactor.

It is found in the cytoplasm. The enzyme catalyses Release of an N-terminal amino acid, Xaa-|-Yaa-, in which Xaa is preferably Leu, but may be other amino acids including Pro although not Arg or Lys, and Yaa may be Pro. Amino acid amides and methyl esters are also readily hydrolyzed, but rates on arylamides are exceedingly low.. The catalysed reaction is Release of an N-terminal amino acid, preferentially leucine, but not glutamic or aspartic acids.. In terms of biological role, presumably involved in the processing and regular turnover of intracellular proteins. Catalyzes the removal of unsubstituted N-terminal amino acids from various peptides. The protein is Probable cytosol aminopeptidase of Acinetobacter baumannii (strain AB307-0294).